A 455-amino-acid polypeptide reads, in one-letter code: 5'-nucleotidase domain-containing protein 1 (455 aa).

D16 (nucleophile) is an active-site residue. D16 and D18 together coordinate Mg(2+). Catalysis depends on D18, which acts as the Proton donor. N6-acetyllysine is present on K171. Residue D313 coordinates Mg(2+). The span at 339–364 shows a compositional bias: basic and acidic residues; it reads GDEGTRSQRPEESEPLEKKGKYEGPK. The tract at residues 339–368 is disordered; it reads GDEGTRSQRPEESEPLEKKGKYEGPKAKPL.

This sequence belongs to the 5'(3')-deoxyribonucleotidase family.

This is 5'-nucleotidase domain-containing protein 1 (NT5DC1) from Homo sapiens (Human).